The following is a 212-amino-acid chain: Octanoyltransferase (212 aa).

In terms of domain architecture, BPL/LPL catalytic spans 33 to 212 (GTAPELVWLL…ATFPEVFGAD (180 aa)). Substrate is bound by residues 72–79 (RGGQYTYH), 144–146 (AIG), and 157–159 (GIA). Cysteine 175 acts as the Acyl-thioester intermediate in catalysis.

Belongs to the LipB family.

The protein resides in the cytoplasm. The catalysed reaction is octanoyl-[ACP] + L-lysyl-[protein] = N(6)-octanoyl-L-lysyl-[protein] + holo-[ACP] + H(+). Its pathway is protein modification; protein lipoylation via endogenous pathway; protein N(6)-(lipoyl)lysine from octanoyl-[acyl-carrier-protein]: step 1/2. Functionally, catalyzes the transfer of endogenously produced octanoic acid from octanoyl-acyl-carrier-protein onto the lipoyl domains of lipoate-dependent enzymes. Lipoyl-ACP can also act as a substrate although octanoyl-ACP is likely to be the physiological substrate. This Paramagnetospirillum magneticum (strain ATCC 700264 / AMB-1) (Magnetospirillum magneticum) protein is Octanoyltransferase.